The following is a 166-amino-acid chain: Mitochondrial inner membrane protease subunit 1 (166 aa).

Active-site residues include S40 and K83.

The protein belongs to the peptidase S26 family. IMP1 subfamily. Heterodimer of 2 subunits, IMMPL1 and IMMPL2.

Its subcellular location is the mitochondrion inner membrane. Its function is as follows. Catalyzes the removal of transit peptides required for the targeting of proteins from the mitochondrial matrix, across the inner membrane, into the inter-membrane space. Known to process the nuclear encoded protein DIABLO. This is Mitochondrial inner membrane protease subunit 1 (IMMP1L) from Homo sapiens (Human).